The primary structure comprises 933 residues: MSQQSSSPTKEDNNSSSPVVPNPDSVPPQLSSPALFYSSSSSQGDIYGRNNSQNLSQGEGNIRAAIGSSPLNFPSSSQRQNSDVFQSQGRQGRIRSSASASGRSRYHSDLRSDRALPTSSSSLGRNGQNRVHMRRNDIHTSDLSSPRRIVDFDTRSGVNTLDTSSSSAPPSEASEPLRIIWGTNVSIQECTTNFRNFLMSFKYKFRKILDEREEFINNTTDEELYYIKQLNEMRELGTSNLNLDARNLLAYKQTEDLYHQLLNYPQEVISIMDQTIKDCMVSLIVDNNLDYDLDEIETKFYKVRPYNVGSCKGMRELNPNDIDKLINLKGLVLRSTPVIPDMKVAFFKCNVCDHTMAVEIDRGVIQEPARCERIDCNEPNSMSLIHNRCSFADKQVIKLQETPDFVPDGQTPHSISLCVYDELVDSCRAGDRIEVTGTFRSIPIRANSRQRVLKSLYKTYVDVVHVKKVSDKRLDVDTSTIEQELMQNKVDHNEVEEVRQITDQDLAKIREVAAREDLYSLLARSIAPSIYELEDVKKGILLQLFGGTNKTFTKGGRYRGDINILLCGDPSTSKSQILQYVHKITPRGVYTSGKGSSAVGLTAYITRDVDTKQLVLESGALVLSDGGVCCIDEFDKMSDSTRSVLHEVMEQQTISIAKAGIITTLNARSSILASANPIGSRYNPNLPVTENIDLPPPLLSRFDLVYLVLDKVDEKNDRELAKHLTNLYLEDKPEHISQDDVLPVEFLTMYISYAKEHIHPIITEAAKTELVRAYVGMRKMGDDSRSDEKRITATTRQLESMIRLAEAHAKMKLKNVVELEDVQEAVRLIRSAIKDYATDPKTGKIDMNLVQTGKSVIQRKLQEDLSREIMNVLKDQASDSMSFNELIKQINEHSQDRVESSDIQEALSRLQQEDKVIVLGEGVRRSVRLNNRV.

2 disordered regions span residues 1–149 (MSQQ…PRRI) and 154–173 (TRSGVNTLDTSSSSAPPSEA). Low complexity predominate over residues 27 to 42 (PPQLSSPALFYSSSSS). 2 stretches are compositionally biased toward polar residues: residues 49–59 (RNNSQNLSQGE) and 69–85 (SPLNFPSSSQRQNSDVF). 3 positions are modified to phosphoserine: serine 52, serine 56, and serine 69. Positions 86–103 (QSQGRQGRIRSSASASGR) are enriched in low complexity. Positions 117 to 129 (PTSSSSLGRNGQN) are enriched in polar residues. Over residues 164-173 (SSSSAPPSEA) the composition is skewed to low complexity. The region spanning 518–725 (LYSLLARSIA…NDRELAKHLT (208 aa)) is the MCM domain. 568–575 (GDPSTSKS) is an ATP binding site. The short motif at 700 to 703 (SRFD) is the Arginine finger element.

Belongs to the MCM family. In terms of assembly, component of the MCM2-7 complex. The complex forms a toroidal hexameric ring with the proposed subunit order MCM2-MCM6-MCM4-MCM7-MCM3-MCM5; loaded onto DNA, forms a head-head double hexamer.

Its subcellular location is the nucleus. It carries out the reaction ATP + H2O = ADP + phosphate + H(+). Functionally, acts as a component of the MCM2-7 complex (MCM complex) which is the putative replicative helicase essential for 'once per cell cycle' DNA replication initiation and elongation in eukaryotic cells. The active ATPase sites in the MCM2-7 ring are formed through the interaction surfaces of two neighboring subunits such that a critical structure of a conserved arginine finger motif is provided in trans relative to the ATP-binding site of the Walker A box of the adjacent subunit. The six ATPase active sites, however, are likely to contribute differentially to the complex helicase activity. Once loaded onto DNA, double hexamers can slide on dsDNA in the absence of ATPase activity. Required for S phase execution. This is DNA replication licensing factor MCM4 (MCM4) from Saccharomyces cerevisiae (strain ATCC 204508 / S288c) (Baker's yeast).